The primary structure comprises 197 residues: Probable GTP-binding protein EngB (197 aa).

One can recognise an EngB-type G domain in the interval 22–195 (KRIEIAFVGR…LKVLESVIDF (174 aa)). GTP-binding positions include 30–37 (GRSNVGKS), 57–61 (GKTRL), 75–78 (DLPG), 142–145 (TKVD), and 174–176 (FSS). 2 residues coordinate Mg(2+): S37 and T59.

The protein belongs to the TRAFAC class TrmE-Era-EngA-EngB-Septin-like GTPase superfamily. EngB GTPase family. Mg(2+) is required as a cofactor.

In terms of biological role, necessary for normal cell division and for the maintenance of normal septation. The sequence is that of Probable GTP-binding protein EngB from Clostridium kluyveri (strain ATCC 8527 / DSM 555 / NBRC 12016 / NCIMB 10680 / K1).